The following is a 435-amino-acid chain: GTPase Obg (435 aa).

Positions 6–164 (ADFVDRVKIF…RWLELELKIL (159 aa)) constitute an Obg domain. The OBG-type G domain maps to 165 to 335 (ADVGLVGYPN…LVSKLASIVR (171 aa)). GTP is bound by residues 171 to 178 (GYPNVGKS), 196 to 200 (FTTLI), 217 to 220 (DIPG), 287 to 290 (NKID), and 316 to 318 (SAV). Residues Ser-178 and Thr-198 each coordinate Mg(2+). The OCT domain maps to 357–435 (RRLPEKFHLE…IGDFEFEYRE (79 aa)).

The protein belongs to the TRAFAC class OBG-HflX-like GTPase superfamily. OBG GTPase family. As to quaternary structure, monomer. The cofactor is Mg(2+).

It is found in the cytoplasm. Functionally, an essential GTPase which binds GTP, GDP and possibly (p)ppGpp with moderate affinity, with high nucleotide exchange rates and a fairly low GTP hydrolysis rate. Plays a role in control of the cell cycle, stress response, ribosome biogenesis and in those bacteria that undergo differentiation, in morphogenesis control. The chain is GTPase Obg from Thermotoga petrophila (strain ATCC BAA-488 / DSM 13995 / JCM 10881 / RKU-1).